The chain runs to 231 residues: NAD(+) ADP-ribosyltransferase (231 aa).

It catalyses the reaction NAD(+) + (ADP-D-ribosyl)n-acceptor = nicotinamide + (ADP-D-ribosyl)n+1-acceptor + H(+).. With respect to regulation, activity increases up to 5-6 times with Mg(2+) at 50 uM or higher ion concentration. 3-aminobenzamide (3-ABA) inhibits the activity by up to half and nicotinamide to a lesser extent. Zn(2+) inhibits the activity to half-maximal rate but at 500 uM concentration of the ion. In terms of biological role, catalyzes auto- and hetero-ADP ribosylation and produces short oligomers by elongating the ADP-ribose chain (up to 6-mer). Binds DNA non-specifically but with high affinity. Forms very stable complexes with circular DNA wherein the circular DNA confers thermostability compared to linear DNA. This chain is NAD(+) ADP-ribosyltransferase, found in Saccharolobus solfataricus (Sulfolobus solfataricus).